The chain runs to 505 residues: Hexose transporter 1 (505 aa).

At 1 to 27 (MNILRMDILSRGGTQEIEHRDGFFNTS) the chain is on the cytoplasmic side. The chain crosses the membrane as a helical span at residues 28–48 (FQYVLSACLASFIFGYQVSVL). Over 49 to 78 (NTIKSYIVVEFEWCSTKTDTSCEDSILKSS) the chain is Extracellular. An intrachain disulfide couples cysteine 62 to cysteine 70. A helical transmembrane segment spans residues 79–99 (FLLASVFIGAVLGSGFSGYLV). Topologically, residues 100 to 104 (KFGRR) are cytoplasmic. The helical transmembrane segment at 105–125 (FSLMVIYIFFIFVSILTAISH) threads the bilayer. Residues 126–134 (HFHTILYAR) lie on the Extracellular side of the membrane. A helical membrane pass occupies residues 135 to 155 (LLSGFGIGLITVSVPMYISEM). Residues 156–165 (THKDKKGAYG) are Cytoplasmic-facing. The helical transmembrane segment at 166–186 (VLHQLFITFGIFVAVLLGLFL) threads the bilayer. Residue glutamine 169 coordinates alpha-D-glucose. Glutamine 169 lines the beta-D-glucose pocket. Topologically, residues 187 to 208 (GDGPKINGKSIELSNFEMFWWR) are extracellular. The helical transmembrane segment at 209-229 (FMFFLPTIISLLGIILLIAFY) threads the bilayer. Residues 230 to 294 (KEETPYFLYE…SALKIPAYRN (65 aa)) lie on the Cytoplasmic side of the membrane. The chain crosses the membrane as a helical span at residues 295 to 315 (VIILGCILSGFQQFTGINVLV). Alpha-D-glucose contacts are provided by glutamine 306, glutamine 307, and asparagine 312. Beta-D-glucose is bound at residue glutamine 306. Asparagine 312 contributes to the beta-D-glucose binding site. Residues 316–332 (ANSNELYKEFLDKNLIT) are Extracellular-facing. The helical transmembrane segment at 333–353 (ILSVIMTAVNFLMTFPAIYII) threads the bilayer. Asparagine 342 contacts beta-D-glucose. Residues 354-358 (EKIGR) lie on the Cytoplasmic side of the membrane. A helical membrane pass occupies residues 359–379 (KTLLLGGCIGVICAFLPTVIA). Over 380–393 (RQVWGPTKIVNGLS) the chain is Extracellular. A helical membrane pass occupies residues 394–414 (IAGTFLMIISFAVSYGPVLWI). Alpha-D-glucose is bound at residue tryptophan 413. The Cytoplasmic portion of the chain corresponds to 415–430 (YLHEMYPSEIKDSAAS). The chain crosses the membrane as a helical span at residues 431 to 451 (LASLINWVCAIIVVFPSDIII). The Extracellular segment spans residues 452–456 (KKSPS). Residues 457–477 (ILFMFFSVMCIIAFLFIMFFI) traverse the membrane as a helical segment. Residues 478-505 (KETKGGEIGTSPYISLEERQKHIGKSKV) are Cytoplasmic-facing.

It belongs to the major facilitator superfamily. Sugar transporter (TC 2.A.1.1) family. As to quaternary structure, homodimer.

It is found in the cell membrane. The catalysed reaction is D-glucose(out) = D-glucose(in). It catalyses the reaction D-fructose(out) = D-fructose(in). The enzyme catalyses D-galactose(in) = D-galactose(out). It carries out the reaction D-mannose(out) = D-mannose(in). The catalysed reaction is D-glucosamine(out) = D-glucosamine(in). It catalyses the reaction D-xylose(out) = D-xylose(in). Inhibited by cytochalasin B. Functionally, sodium-independent facilitative hexose transporter. Can transport D-glucose and D-fructose. Can transport D-mannose, D-galactose, D-xylose and D-glucosamine. The chain is Hexose transporter 1 from Plasmodium yoelii yoelii.